Reading from the N-terminus, the 440-residue chain is Chromosome partition protein MukF (440 aa).

The tract at residues 208–236 (LSETSGTLRELQDTLEAAGDKLQANLLRI) is leucine-zipper.

It belongs to the MukF family. As to quaternary structure, interacts, and probably forms a ternary complex, with MukE and MukB via its C-terminal region. The complex formation is stimulated by calcium or magnesium. It is required for an interaction between MukE and MukB.

Its subcellular location is the cytoplasm. It is found in the nucleoid. Involved in chromosome condensation, segregation and cell cycle progression. May participate in facilitating chromosome segregation by condensation DNA from both sides of a centrally located replisome during cell division. Not required for mini-F plasmid partitioning. Probably acts via its interaction with MukB and MukE. Overexpression results in anucleate cells. It has a calcium binding activity. This is Chromosome partition protein MukF from Salmonella gallinarum (strain 287/91 / NCTC 13346).